A 289-amino-acid polypeptide reads, in one-letter code: Zinc finger matrin-type protein 3 (289 aa).

The tract at residues 1-42 (MILLQHAVLPPPKQPSPSPPMSVATRSTGTLQLPPQKPFGQE) is disordered. A compositionally biased stretch (pro residues) spans 9-20 (LPPPKQPSPSPP). The segment covering 24-33 (ATRSTGTLQL) has biased composition (polar residues). 2 Matrin-type zinc fingers span residues 70–100 (LYCK…KLRN) and 147–177 (DYCK…RLRL). Residues 180–191 (AQSNSFSESSEL) are compositionally biased toward polar residues. Residues 180–201 (AQSNSFSESSELGQRRARKEGN) are disordered. A Matrin-type 3 zinc finger spans residues 246-276 (FYCSMCNVGAGEEMEFRQHLESKQHKSKVSE).

As to quaternary structure, interacts with dsRNA. As to expression, highly expressed in adult brain, and moderately in adult kidney and testis. Not detected in fetal brain, heart, pancreas, adrenal gland, liver or small intestine.

It localises to the nucleus. The protein resides in the nucleolus. In terms of biological role, acts as a bona fide target gene of p53/TP53. May play a role in the TP53-dependent growth regulatory pathway. May contribute to TP53-mediated apoptosis by regulation of TP53 expression and translocation to the nucleus and nucleolus. This chain is Zinc finger matrin-type protein 3, found in Homo sapiens (Human).